A 459-amino-acid polypeptide reads, in one-letter code: VGFKAGVKDYKLTYYTPDYETKDTDILAAFRVTPQPGVPPEEAGAAVAAESSTGTWTTVWTDGLTNLDRYKGRCYHIEPVAGEESQFIAYVAYPLDLFEEGSVTNMFTSIVGNVFGFKALRALRLEDLRIPVAYVKTFQGPPHGIQVERDKLNKYGRPLLGCTIKPKLGLSAKNYGRAVYECLRGGLDFTKDDENVNSQPFMRWRDRFLFCAEALYKAQAETGEIKGHYLNATAGTCEEMLKRAVFARELGVPIVMHDYLTGGFTANTSLAFYCRDNGLLLHIHRAMHAVIDRQKNHGIHFRVLAKALRMSGGDHIHSGTVVGKLEGEREITLGFVDLLRDDFIEKDRSRGIYFTQDWVSLPGVLPVASGGIHVWHMPALTEIFGDDSVLQFGGGTLGHPWGNAPGAVANRVALEACVQARNEGRDLAREGNEIIREACKWSPELAAACEVWKEIKFEF.

Position 4 is an N6,N6,N6-trimethyllysine (Lys-4). Residues Asn-113 and Thr-163 each contribute to the substrate site. The Proton acceptor role is filled by Lys-165. Lys-167 contacts substrate. Lys-191, Asp-193, and Glu-194 together coordinate Mg(2+). At Lys-191 the chain carries N6-carboxylysine. Catalysis depends on His-284, which acts as the Proton acceptor. Arg-285, His-317, and Ser-369 together coordinate substrate.

The protein belongs to the RuBisCO large chain family. Type I subfamily. Heterohexadecamer of 8 large chains and 8 small chains; disulfide-linked. The disulfide link is formed within the large subunit homodimers. Mg(2+) is required as a cofactor. Post-translationally, the disulfide bond which can form in the large chain dimeric partners within the hexadecamer appears to be associated with oxidative stress and protein turnover.

It localises to the plastid. The protein localises to the chloroplast. It catalyses the reaction 2 (2R)-3-phosphoglycerate + 2 H(+) = D-ribulose 1,5-bisphosphate + CO2 + H2O. The catalysed reaction is D-ribulose 1,5-bisphosphate + O2 = 2-phosphoglycolate + (2R)-3-phosphoglycerate + 2 H(+). Functionally, ruBisCO catalyzes two reactions: the carboxylation of D-ribulose 1,5-bisphosphate, the primary event in carbon dioxide fixation, as well as the oxidative fragmentation of the pentose substrate in the photorespiration process. Both reactions occur simultaneously and in competition at the same active site. This Heuchera micrantha (Alum root) protein is Ribulose bisphosphate carboxylase large chain.